The sequence spans 278 residues: Phosphatidylglycerol--prolipoprotein diacylglyceryl transferase (278 aa).

A run of 3 helical transmembrane segments spans residues 21-41, 54-74, and 88-108; these read WYGI…QASV, IIFW…VIFQ, and IWQG…TGII. Arg-136 is an a 1,2-diacyl-sn-glycero-3-phospho-(1'-sn-glycerol) binding site. Helical transmembrane passes span 176–196, 202–222, and 234–254; these read QPTF…LILL, IGDT…FVEG, and IRIA…IMIV.

This sequence belongs to the Lgt family.

The protein resides in the cell membrane. The enzyme catalyses L-cysteinyl-[prolipoprotein] + a 1,2-diacyl-sn-glycero-3-phospho-(1'-sn-glycerol) = an S-1,2-diacyl-sn-glyceryl-L-cysteinyl-[prolipoprotein] + sn-glycerol 1-phosphate + H(+). It participates in protein modification; lipoprotein biosynthesis (diacylglyceryl transfer). In terms of biological role, catalyzes the transfer of the diacylglyceryl group from phosphatidylglycerol to the sulfhydryl group of the N-terminal cysteine of a prolipoprotein, the first step in the formation of mature lipoproteins. The sequence is that of Phosphatidylglycerol--prolipoprotein diacylglyceryl transferase from Staphylococcus saprophyticus subsp. saprophyticus (strain ATCC 15305 / DSM 20229 / NCIMB 8711 / NCTC 7292 / S-41).